The following is a 517-amino-acid chain: Beclin-1-like protein (517 aa).

The interval 76–106 (LPRHKPPQSQGIPPRPRGASSPQPDATQSGK) is disordered. The span at 95 to 105 (SSPQPDATQSG) shows a compositional bias: polar residues. Residues 172–266 (CLECMRVLSD…NRFNELEDRY (95 aa)) adopt a coiled-coil conformation.

Belongs to the beclin family. As to quaternary structure, component of a phosphatidylinositol 3-kinase (PI3K) complex composed of ATG6, SH3P2 and FREE1. Interacts with SINAT1, SINAT2, SINAT5, SINAT6, TRAF1A and TRAF1B. Interacts with TUBB8/TUB8. Component of a complex made of VPS38/USL1 and PI3K main subunits such as VPS15, ATG6/VPS30 and VPS34. Binds directly to VPS38/USL1. Post-translationally, ubiquitinated. The interaction with SINAT1 or SINAT2, and the presence of TRAF1A/MUSE14 and TRAF1B/MUSE13, mediates its proteasome-dependent degradation. In terms of tissue distribution, highly expressed in mature pollen grains. Expressed in roots, leaves, stems, flowers and siliques.

It is found in the cytoplasm. The protein localises to the cytoskeleton. Required for normal plant development. Required for pollen germination. Required for autophagic activity. Required to limit the pathogen-associated cell death response. May be involved in vacuolar protein sorting. Binds to microtubules. May facilitate efficient recruitment of other ATG proteins to assemble scaffolds for autophagosome biogenesis. The polypeptide is Beclin-1-like protein (Arabidopsis thaliana (Mouse-ear cress)).